A 1217-amino-acid chain; its full sequence is ATP-dependent helicase/nuclease subunit A (1217 aa).

Residues 10–475 form the UvrD-like helicase ATP-binding domain; that stretch reads VIWTDAQWQS…IDLSQNFRSR (466 aa). 31–38 is an ATP binding site; sequence AAAGSGKT. The UvrD-like helicase C-terminal domain occupies 476–786; the sequence is KEVLSTTNYI…RMMTIHSSKG (311 aa).

It belongs to the helicase family. AddA subfamily. As to quaternary structure, heterodimer of AddA and AddB/RexB. Mg(2+) serves as cofactor.

It carries out the reaction Couples ATP hydrolysis with the unwinding of duplex DNA by translocating in the 3'-5' direction.. The catalysed reaction is ATP + H2O = ADP + phosphate + H(+). In terms of biological role, the heterodimer acts as both an ATP-dependent DNA helicase and an ATP-dependent, dual-direction single-stranded exonuclease. Recognizes the chi site generating a DNA molecule suitable for the initiation of homologous recombination. The AddA nuclease domain is required for chi fragment generation; this subunit has the helicase and 3' -&gt; 5' nuclease activities. In Staphylococcus aureus (strain Mu3 / ATCC 700698), this protein is ATP-dependent helicase/nuclease subunit A.